The primary structure comprises 412 residues: Polyferredoxin protein MvhB (412 aa).

4Fe-4S ferredoxin-type domains follow at residues 2-29 (IIVN…VTPE), 30-57 (DVIY…LEDL), 67-96 (GRIV…LDEG), 97-127 (KVKK…VEGI), 138-166 (EGPI…LDKV), 168-197 (GVIE…ISGR), 207-236 (KKFE…PRTS), 238-266 (LTVE…LEVE), 276-305 (EGLV…VVTK), 314-345 (EKVD…LVDM), 357-386 (KRVQ…LTDE), and 385-412 (DEKV…LSLK). Positions 9, 12, 15, and 19 each coordinate [4Fe-4S] cluster. Positions 76, 79, 82, 86, 107, 110, 113, 117, 146, 149, 152, 156, 177, 180, 183, 187, 216, 219, 222, 226, 246, 249, 252, and 256 each coordinate [4Fe-4S] cluster. [4Fe-4S] cluster-binding residues include cysteine 325, cysteine 328, cysteine 331, cysteine 335, cysteine 366, cysteine 369, cysteine 372, cysteine 376, cysteine 394, cysteine 397, cysteine 400, and cysteine 404.

The cofactor is [4Fe-4S] cluster.

This chain is Polyferredoxin protein MvhB (mvhB), found in Methanothermobacter thermautotrophicus (strain ATCC 29096 / DSM 1053 / JCM 10044 / NBRC 100330 / Delta H) (Methanobacterium thermoautotrophicum).